The primary structure comprises 302 residues: Glycine--tRNA ligase alpha subunit (302 aa).

This sequence belongs to the class-II aminoacyl-tRNA synthetase family. In terms of assembly, tetramer of two alpha and two beta subunits.

Its subcellular location is the cytoplasm. It carries out the reaction tRNA(Gly) + glycine + ATP = glycyl-tRNA(Gly) + AMP + diphosphate. The polypeptide is Glycine--tRNA ligase alpha subunit (Baumannia cicadellinicola subsp. Homalodisca coagulata).